The following is a 148-amino-acid chain: AVTVTTMLVRIPIPASQGYLNFGDIMIMLVAVLFGPLVGGFAGGVGSALADVIGYPSWALFTLVIKGTEGVIVGWFSKGTTNYGRILLGTVLGGIVMVLGYVSVAYVLYGPGGAVAEFYNDIVQAVSGIIIGGGLGYILKKRIGPILE.

This is an uncharacterized protein from Pyrococcus woesei.